The primary structure comprises 750 residues: Neprilysin (750 aa).

A compositionally biased stretch (polar residues) spans 1 to 14; sequence MGKSESQMDITDIN. The segment at 1-20 is disordered; that stretch reads MGKSESQMDITDINTPKPKK. G2 carries N-myristoyl glycine lipidation. Topologically, residues 2–28 are cytoplasmic; it reads GKSESQMDITDINTPKPKKKQRWTPLE. Phosphoserine is present on residues S4 and S6. The short motif at 16–23 is the Stop-transfer sequence element; that stretch reads PKPKKKQR. A helical; Signal-anchor for type II membrane protein membrane pass occupies residues 29 to 51; the sequence is ISLSVLVLLLTIIAVTMIALYAT. At 52-750 the chain is on the extracellular side; the sequence is YDDGICKSSD…MNPEKKCRVW (699 aa). The region spanning 56-750 is the Peptidase M13 domain; the sequence is ICKSSDCIKS…MNPEKKCRVW (695 aa). 6 cysteine pairs are disulfide-bonded: C57–C62, C80–C735, C88–C695, C143–C411, C234–C242, and C621–C747. R103 provides a ligand contact to a peptide. N145 is a glycosylation site (N-linked (GlcNAc...) asparagine). Residues N285, N311, N325, and N335 are each glycosylated (N-linked (GlcNAc...) asparagine). H584 lines the Zn(2+) pocket. E585 is an active-site residue. H588 contributes to the Zn(2+) binding site. The N-linked (GlcNAc...) asparagine glycan is linked to N628. E647 is a Zn(2+) binding site. Catalysis depends on D651, which acts as the Proton donor.

Belongs to the peptidase M13 family. The cofactor is Zn(2+). In terms of processing, myristoylation is a determinant of membrane targeting. Post-translationally, glycosylation at Asn-628 is necessary both for surface expression and neutral endopeptidase activity.

The protein resides in the cell membrane. It catalyses the reaction Preferential cleavage of polypeptides between hydrophobic residues, particularly with Phe or Tyr at P1'.. The catalysed reaction is substance P + H2O = substance P(1-9) + L-Leu-L-Met-NH2. It carries out the reaction substance P + H2O = substance P(1-7) + L-Phe-Gly-L-Leu-L-Met-NH2. The enzyme catalyses neurotensin + H2O = neurotensin(1-11) + L-isoleucyl-L-leucine. It catalyses the reaction neurotensin + H2O = neurotensin(1-10) + L-tyrosyl-L-isoleucyl-L-leucine. In terms of biological role, thermolysin-like specificity, but is almost confined on acting on polypeptides of up to 30 amino acids. Biologically important in the destruction of opioid peptides such as Met- and Leu-enkephalins by cleavage of a Gly-Phe bond. Catalyzes cleavage of bradykinin, substance P and neurotensin peptides. Able to cleave angiotensin-1, angiotensin-2 and angiotensin 1-9. Involved in the degradation of atrial natriuretic factor (ANF) and brain natriuretic factor (BNP(1-32)). Displays UV-inducible elastase activity toward skin preelastic and elastic fibers. The sequence is that of Neprilysin (MME) from Pongo abelii (Sumatran orangutan).